Reading from the N-terminus, the 220-residue chain is Large ribosomal subunit protein uL6c (220 aa).

A chloroplast-targeting transit peptide spans 1–38 (MSLPLPSHMKSVFLGMKVEISTSVPVTRIGFWRKSVDC).

As to quaternary structure, component of the chloroplast large ribosomal subunit (LSU). Mature 70S chloroplast ribosomes of higher plants consist of a small (30S) and a large (50S) subunit. The 30S small subunit contains 1 molecule of ribosomal RNA (16S rRNA) and 24 different proteins. The 50S large subunit contains 3 rRNA molecules (23S, 5S and 4.5S rRNA) and 33 different proteins.

It localises to the plastid. Its subcellular location is the chloroplast. Functionally, component of the chloroplast ribosome (chloro-ribosome), a dedicated translation machinery responsible for the synthesis of chloroplast genome-encoded proteins, including proteins of the transcription and translation machinery and components of the photosynthetic apparatus. The chain is Large ribosomal subunit protein uL6c (RPL6) from Spinacia oleracea (Spinach).